Consider the following 156-residue polypeptide: Small ribosomal subunit protein uS7 (156 aa).

Belongs to the universal ribosomal protein uS7 family. As to quaternary structure, part of the 30S ribosomal subunit. Contacts proteins S9 and S11.

In terms of biological role, one of the primary rRNA binding proteins, it binds directly to 16S rRNA where it nucleates assembly of the head domain of the 30S subunit. Is located at the subunit interface close to the decoding center, probably blocks exit of the E-site tRNA. In Gloeothece citriformis (strain PCC 7424) (Cyanothece sp. (strain PCC 7424)), this protein is Small ribosomal subunit protein uS7.